The sequence spans 418 residues: Mitochondrial outer membrane protein SLC25A46 (418 aa).

Residues serine 32 and serine 35 each carry the phosphoserine modification. The residue at position 45 (threonine 45) is a Phosphothreonine. A disordered region spans residues 46–96 (PPDIPGSRNLHWGEKSPSYGVPSAPPTLEGSAEEPFPGGGEGPRPGPSSEQ). The stretch at 96-187 (QLNRFAGFGI…GIISEFTPLP (92 aa)) is one Solcar 1 repeat. 6 helical membrane passes run 103–123 (FGIG…CIVL), 167–187 (FIVQ…TPLP), 202–222 (HLLL…ASLI), 258–278 (LLPL…HYII), 314–334 (FPEL…LYPL), and 382–402 (VFGF…HATI). Residues 311-413 (DAYFPELIAN…QITKMIYSTL (103 aa)) form a Solcar 2 repeat.

This sequence belongs to the mitochondrial carrier (TC 2.A.29) family. Associates with the mitochondrial contact site and cristae organizing system (MICOS) complex. May associate with the endoplasmic reticulum membrane protein complex (EMC).

Its subcellular location is the mitochondrion outer membrane. In terms of biological role, transmembrane protein of the mitochondrial outer membrane that controls mitochondrial organization. May regulate the assembly of the MICOS (mitochondrial contact site and cristae organizing system) complex which is essential to the biogenesis and dynamics of mitochondrial cristae, the inwards folds of the inner mitochondrial membrane. Through its interaction with the EMC (endoplasmic reticulum membrane protein complex), could regulate mitochondrial lipid homeostasis and thereby mitochondrial fission. This chain is Mitochondrial outer membrane protein SLC25A46, found in Mus musculus (Mouse).